A 417-amino-acid polypeptide reads, in one-letter code: Argininosuccinate synthase (417 aa).

Position 9–17 (9–17 (AYSGGLDTS)) interacts with ATP. Y87 contacts L-citrulline. Residue G117 coordinates ATP. L-aspartate contacts are provided by T119, N123, and D124. N123 is a binding site for L-citrulline. L-citrulline-binding residues include R127, S175, S184, E260, and Y272.

It belongs to the argininosuccinate synthase family. Type 1 subfamily. As to quaternary structure, homotetramer.

It localises to the cytoplasm. The enzyme catalyses L-citrulline + L-aspartate + ATP = 2-(N(omega)-L-arginino)succinate + AMP + diphosphate + H(+). It functions in the pathway amino-acid biosynthesis; L-arginine biosynthesis; L-arginine from L-ornithine and carbamoyl phosphate: step 2/3. This Oceanobacillus iheyensis (strain DSM 14371 / CIP 107618 / JCM 11309 / KCTC 3954 / HTE831) protein is Argininosuccinate synthase.